The chain runs to 307 residues: ATP-dependent (S)-NAD(P)H-hydrate dehydratase (307 aa).

Positions methionine 1–valine 291 constitute a YjeF C-terminal domain. (6S)-NADPHX-binding positions include glycine 96 and asparagine 150–arginine 156. ATP is bound by residues lysine 194–aspartate 198 and serine 214–glycine 223. Aspartate 224 is a (6S)-NADPHX binding site.

Belongs to the NnrD/CARKD family. Requires Mg(2+) as cofactor.

The enzyme catalyses (6S)-NADHX + ATP = ADP + phosphate + NADH + H(+). It carries out the reaction (6S)-NADPHX + ATP = ADP + phosphate + NADPH + H(+). In terms of biological role, catalyzes the dehydration of the S-form of NAD(P)HX at the expense of ATP, which is converted to ADP. Together with NAD(P)HX epimerase, which catalyzes the epimerization of the S- and R-forms, the enzyme allows the repair of both epimers of NAD(P)HX, a damaged form of NAD(P)H that is a result of enzymatic or heat-dependent hydration. The protein is ATP-dependent (S)-NAD(P)H-hydrate dehydratase of Caenorhabditis briggsae.